A 152-amino-acid polypeptide reads, in one-letter code: Arginine repressor (152 aa).

The protein belongs to the ArgR family.

It is found in the cytoplasm. Its pathway is amino-acid biosynthesis; L-arginine biosynthesis [regulation]. Its function is as follows. Regulates arginine biosynthesis genes. In Caldicellulosiruptor bescii (strain ATCC BAA-1888 / DSM 6725 / KCTC 15123 / Z-1320) (Anaerocellum thermophilum), this protein is Arginine repressor.